Reading from the N-terminus, the 500-residue chain is Recombining binding protein suppressor of hairless (500 aa).

Positions 1–30 (MDHTEGSPAEEPPAHAPSPGKFGERPPPKR) are disordered. DNA-binding regions lie at residues 57–67 (QKSYGNEKRFF) and 165–170 (SKPSKK). Lysine 175 carries the post-translational modification N6-acetyllysine. A DNA-binding region spans residues 192 to 197 (RLRSQT). The IPT/TIG domain occupies 355-445 (PVVESLQLNG…YSTSLTFTYT (91 aa)). The span at 465–481 (SSQVPPNESNTNSEGSY) shows a compositional bias: polar residues. The tract at residues 465–500 (SSQVPPNESNTNSEGSYTNASTNSTSVTSSTATVVS) is disordered. The span at 482–500 (TNASTNSTSVTSSTATVVS) shows a compositional bias: low complexity.

The protein belongs to the Su(H) family. As to quaternary structure, interacts with activated NOTCH1, NOTCH2 or NOTCH3. Interacts with MINT/SHARP. This interaction may mediate the recruitment of large corepressor complexes containing proteins such as HDAC1, HDAC2, NCOR2, SAP30, FHL1/KYOT2 and CIR1. Interacts with EP300, MAML1 and PTF1A. Interacts with RITA1/C12orf52, leading to nuclear export, prevent the interaction between RBPJ and NICD product and subsequent down-regulation of the Notch signaling pathway. Interacts with SNW1. Interacts with CHCHD2 and CXXC5. Interacts with BEND6 (via BEN domain). Interacts with NKAPL. Interacts with ZMIZ1. Interacts with RBM15. Interacts with L3MBTL3 and KDM1A; the interaction with KDM1A is weaker in the absence of L3MBTL3 and the interaction with L3MBTL3 is impaired by Notch-derived peptide containing the intracellular domain (NICD). In terms of assembly, (Microbial infection) Interacts with EBV EBNA2. Interacts with EBV EBNA3. Interacts with EBV EBNA4. Interacts with EBV EBNA6 (via N-terminus).

Its subcellular location is the nucleus. The protein resides in the cytoplasm. Its function is as follows. Transcriptional regulator that plays a central role in Notch signaling, a signaling pathway involved in cell-cell communication that regulates a broad spectrum of cell-fate determinations. Acts as a transcriptional repressor when it is not associated with Notch proteins. When associated with some NICD product of Notch proteins (Notch intracellular domain), it acts as a transcriptional activator that activates transcription of Notch target genes. Probably represses or activates transcription via the recruitment of chromatin remodeling complexes containing histone deacetylase or histone acetylase proteins, respectively. Specifically binds to the immunoglobulin kappa-type J segment recombination signal sequence. Binds specifically to methylated DNA. Binds to the oxygen responsive element of COX4I2 and activates its transcription under hypoxia conditions (4% oxygen). Negatively regulates the phagocyte oxidative burst in response to bacterial infection by repressing transcription of NADPH oxidase subunits. In Homo sapiens (Human), this protein is Recombining binding protein suppressor of hairless.